The sequence spans 241 residues: N-acetylmuramoyl-L-alanine amidase Rv3717 (241 aa).

The first 24 residues, 1-24, serve as a signal peptide directing secretion; sequence MIVGVLVAAATPIISSASATPANI. Residues 29-230 form the MurNAc-LAA domain; it reads VFIDPGHNGA…KYANALVRGV (202 aa). Histidine 35 lines the Zn(2+) pocket. Positions 45-69 are disordered; sequence RQVPTGRGGTKNCQASGTSTNSGYP. Residues 55–67 show a composition bias toward polar residues; the sequence is KNCQASGTSTNSG. Cysteine 57 and cysteine 105 are joined by a disulfide. Residues glutamate 70 and histidine 125 each coordinate Zn(2+). Catalysis depends on glutamate 200, which acts as the Proton donor/acceptor.

It belongs to the N-acetylmuramoyl-L-alanine amidase 3 family. As to quaternary structure, monomer. Zn(2+) serves as cofactor.

The protein resides in the periplasm. It carries out the reaction Hydrolyzes the link between N-acetylmuramoyl residues and L-amino acid residues in certain cell-wall glycopeptides.. The protein operates within cell wall degradation; peptidoglycan degradation. Its activity is regulated as follows. The structure reveals a short flexible hairpin turn that partially occludes the active site and may be involved in autoregulation. In terms of biological role, cell-wall hydrolase that hydrolyzes the amide bond between N-acetylmuramic acid and L-alanine in cell-wall glycopeptides. Is able to hydrolyze the cell walls of several bacterial species (i.e. Paenibacillus sp., B.avium, E.coli DH5alpha, E.aerogenes, L.acidophilus, B.thuringiensis, B.pumilus, B.subtilis and E.coli W3110), thereby showing that it is a cell-wall hydrolase with broad-spectrum activity. May have a role in peptidoglycan fragment recycling. The chain is N-acetylmuramoyl-L-alanine amidase Rv3717 from Mycobacterium tuberculosis (strain ATCC 25618 / H37Rv).